The chain runs to 109 residues: MFGKGGLGGLMKQAQQMQERMQKMQEEIAQLEVTGESGAGLVKVTINGAHNCRRIEIDPSLMEDDKEMAEDLVAAAFNDAVRRADEMQKEKMASVTAGMQLPPGMKFPF.

The disordered stretch occupies residues 1–21 (MFGKGGLGGLMKQAQQMQERM). Residues 10-19 (LMKQAQQMQE) are compositionally biased toward low complexity.

Belongs to the YbaB/EbfC family. In terms of assembly, homodimer.

The protein localises to the cytoplasm. It localises to the nucleoid. Its function is as follows. Binds to DNA and alters its conformation. May be involved in regulation of gene expression, nucleoid organization and DNA protection. This is Nucleoid-associated protein HAPS_1040 from Glaesserella parasuis serovar 5 (strain SH0165) (Haemophilus parasuis).